Here is a 102-residue protein sequence, read N- to C-terminus: Integration host factor subunit beta (102 aa).

The interval 54–102 (HHRPARMGRNPKTGEPVALPAKYVPHFKPGKELRERVNSSRHQAPLRSQ) is disordered. A compositionally biased stretch (basic and acidic residues) spans 82 to 91 (PGKELRERVN). Positions 93–102 (SRHQAPLRSQ) are enriched in polar residues.

This sequence belongs to the bacterial histone-like protein family. In terms of assembly, heterodimer of an alpha and a beta chain.

In terms of biological role, this protein is one of the two subunits of integration host factor, a specific DNA-binding protein that functions in genetic recombination as well as in transcriptional and translational control. The chain is Integration host factor subunit beta from Halorhodospira halophila (strain DSM 244 / SL1) (Ectothiorhodospira halophila (strain DSM 244 / SL1)).